Reading from the N-terminus, the 333-residue chain is DNA repair and recombination protein RadA (333 aa).

ATP is bound at residue 127-134 (GEFGSGKT).

Belongs to the eukaryotic RecA-like protein family.

In terms of biological role, involved in DNA repair and in homologous recombination. Binds and assemble on single-stranded DNA to form a nucleoprotein filament. Hydrolyzes ATP in a ssDNA-dependent manner and promotes DNA strand exchange between homologous DNA molecules. This Pyrobaculum arsenaticum (strain DSM 13514 / JCM 11321 / PZ6) protein is DNA repair and recombination protein RadA.